Here is a 140-residue protein sequence, read N- to C-terminus: ATP synthase epsilon chain (140 aa).

It belongs to the ATPase epsilon chain family. F-type ATPases have 2 components, CF(1) - the catalytic core - and CF(0) - the membrane proton channel. CF(1) has five subunits: alpha(3), beta(3), gamma(1), delta(1), epsilon(1). CF(0) has three main subunits: a, b and c.

It localises to the cell inner membrane. Its function is as follows. Produces ATP from ADP in the presence of a proton gradient across the membrane. In Janthinobacterium sp. (strain Marseille) (Minibacterium massiliensis), this protein is ATP synthase epsilon chain.